A 235-amino-acid chain; its full sequence is UPF0173 metal-dependent hydrolase Oant_3663 (235 aa).

The protein belongs to the UPF0173 family.

The chain is UPF0173 metal-dependent hydrolase Oant_3663 from Brucella anthropi (strain ATCC 49188 / DSM 6882 / CCUG 24695 / JCM 21032 / LMG 3331 / NBRC 15819 / NCTC 12168 / Alc 37) (Ochrobactrum anthropi).